Consider the following 722-residue polypeptide: uncharacterized protein (722 aa).

This is an uncharacterized protein from Treponema pallidum (strain Nichols).